The primary structure comprises 251 residues: Extracellular superoxide dismutase [Cu-Zn] (251 aa).

An N-terminal signal peptide occupies residues 1–15; the sequence is MLAFLFYGLLLAACG. The propeptide occupies 16–24; that stretch reads SVTMSNPGE. 2 cysteine pairs are disulfide-bonded: Cys77–Cys222 and Cys139–Cys221. An N-linked (GlcNAc...) asparagine glycan is attached at Asn121. Cu cation is bound by residues His128, His130, and His145. Residues His145, His153, His156, and Asp159 each contribute to the Zn(2+) site. His195 is a binding site for Cu cation. The disordered stretch occupies residues 230–251; the sequence is AAWESQTKERKKRRRESECKTT.

The protein belongs to the Cu-Zn superoxide dismutase family. Homotetramer. Directly interacts with ATP7A/MNK; this interaction is copper-dependent and is required for SOD3 activity. It depends on Cu cation as a cofactor. Zn(2+) is required as a cofactor.

It is found in the secreted. It localises to the extracellular space. The protein resides in the golgi apparatus. Its subcellular location is the trans-Golgi network. The catalysed reaction is 2 superoxide + 2 H(+) = H2O2 + O2. In terms of biological role, protect the extracellular space from toxic effect of reactive oxygen intermediates by converting superoxide radicals into hydrogen peroxide and oxygen. The sequence is that of Extracellular superoxide dismutase [Cu-Zn] (Sod3) from Mus musculus (Mouse).